We begin with the raw amino-acid sequence, 747 residues long: Phenylalanine ammonia-lyase 2 (747 aa).

The segment covering 1–20 (MTILSGTTAAPRVNGTTMNG) has biased composition (polar residues). A disordered region spans residues 1–47 (MTILSGTTAAPRVNGTTMNGHSKPHTNGVHLNGHAPKATTESPWPQS). Tyrosine 124 serves as the catalytic Proton donor/acceptor. The 5-imidazolinone (Ala-Gly) cross-link spans 229–231 (ASG). Position 230 is a 2,3-didehydroalanine (Ser) (serine 230). (E)-cinnamate contacts are provided by asparagine 290, glutamine 380, arginine 386, asparagine 416, lysine 487, glutamate 515, and asparagine 518.

It belongs to the PAL/histidase family. As to quaternary structure, homotetramer. Contains an active site 4-methylidene-imidazol-5-one (MIO), which is formed autocatalytically by cyclization and dehydration of residues Ala-Ser-Gly.

It localises to the cytoplasm. The enzyme catalyses L-phenylalanine = (E)-cinnamate + NH4(+). Its pathway is phenylpropanoid metabolism; trans-cinnamate biosynthesis; trans-cinnamate from L-phenylalanine: step 1/1. Functionally, catalyzes the non-oxidative deamination of L-phenylalanine to form trans-cinnamic acid and a free ammonium ion. Facilitates the commitment step in phenylpropanoid pathways that produce secondary metabolites such as lignins, coumarins and flavonoids. In Pleurotus ostreatus (Oyster mushroom), this protein is Phenylalanine ammonia-lyase 2.